Reading from the N-terminus, the 396-residue chain is Na(+)/H(+) antiporter NhaA (396 aa).

11 consecutive transmembrane segments (helical) span residues 16 to 36, 59 to 79, 95 to 115, 124 to 144, 154 to 174, 178 to 198, 213 to 233, 254 to 274, 278 to 298, 328 to 348, and 363 to 383; these read GIIL…GLAG, LLLW…GLEV, TFPA…YAFF, AGWA…MALL, VFLL…IALF, QLSL…LWMN, LVLW…GVIV, ALHP…NAGV, GIGL…GLFI, IFAV…IASL, and LGIL…LRIA.

This sequence belongs to the NhaA Na(+)/H(+) (TC 2.A.33) antiporter family.

The protein resides in the cell inner membrane. The enzyme catalyses Na(+)(in) + 2 H(+)(out) = Na(+)(out) + 2 H(+)(in). Its function is as follows. Na(+)/H(+) antiporter that extrudes sodium in exchange for external protons. This Aeromonas hydrophila subsp. hydrophila (strain ATCC 7966 / DSM 30187 / BCRC 13018 / CCUG 14551 / JCM 1027 / KCTC 2358 / NCIMB 9240 / NCTC 8049) protein is Na(+)/H(+) antiporter NhaA.